The following is a 160-amino-acid chain: Zinc finger A20 and AN1 domain-containing stress-associated protein 5 (160 aa).

The A20-type zinc finger occupies T20–A54. Residues C26, C30, C42, C45, C101, C104, C115, C117, C122, H125, H131, and C133 each coordinate Zn(2+). Residues Q95–G141 form an AN1-type zinc finger.

Its function is as follows. May be involved in environmental stress response. This chain is Zinc finger A20 and AN1 domain-containing stress-associated protein 5 (SAP5), found in Arabidopsis thaliana (Mouse-ear cress).